We begin with the raw amino-acid sequence, 502 residues long: ATP synthase subunit alpha (502 aa).

An ATP-binding site is contributed by 169-176; sequence GDRQTGKT.

It belongs to the ATPase alpha/beta chains family. In terms of assembly, F-type ATPases have 2 components, CF(1) - the catalytic core - and CF(0) - the membrane proton channel. CF(1) has five subunits: alpha(3), beta(3), gamma(1), delta(1), epsilon(1). CF(0) has three main subunits: a(1), b(2) and c(9-12). The alpha and beta chains form an alternating ring which encloses part of the gamma chain. CF(1) is attached to CF(0) by a central stalk formed by the gamma and epsilon chains, while a peripheral stalk is formed by the delta and b chains.

Its subcellular location is the cell inner membrane. It carries out the reaction ATP + H2O + 4 H(+)(in) = ADP + phosphate + 5 H(+)(out). Its function is as follows. Produces ATP from ADP in the presence of a proton gradient across the membrane. The alpha chain is a regulatory subunit. The chain is ATP synthase subunit alpha from Nitratidesulfovibrio vulgaris (strain ATCC 29579 / DSM 644 / CCUG 34227 / NCIMB 8303 / VKM B-1760 / Hildenborough) (Desulfovibrio vulgaris).